The sequence spans 578 residues: Glycosyltransferase family 92 protein RCOM_0530710 (578 aa).

A helical transmembrane segment spans residues 21–43; that stretch reads SFFSVRSLTACLSFFVFLLFISS. Residues 295 to 531 form the GT92 domain; it reads YELCACTMLW…QNQGSKDRAP (237 aa).

It belongs to the glycosyltransferase 92 family.

The protein localises to the membrane. In Ricinus communis (Castor bean), this protein is Glycosyltransferase family 92 protein RCOM_0530710.